The primary structure comprises 231 residues: NADH-ubiquinone oxidoreductase chain 4 (231 aa).

The next 6 helical transmembrane spans lie at 1–21, 34–54, 62–84, 89–111, 128–148, and 169–189; these read PIAG…YGII, MFLP…LTCL, LIAY…QTPW, AMAL…NTTY, ILPM…AIPP, and TIIM…HMFL.

Belongs to the complex I subunit 4 family.

The protein resides in the mitochondrion membrane. The catalysed reaction is a ubiquinone + NADH + 5 H(+)(in) = a ubiquinol + NAD(+) + 4 H(+)(out). Functionally, core subunit of the mitochondrial membrane respiratory chain NADH dehydrogenase (Complex I) that is believed to belong to the minimal assembly required for catalysis. Complex I functions in the transfer of electrons from NADH to the respiratory chain. The immediate electron acceptor for the enzyme is believed to be ubiquinone. The polypeptide is NADH-ubiquinone oxidoreductase chain 4 (MT-ND4) (Bothrops erythromelas (Caatinga lance head)).